A 264-amino-acid polypeptide reads, in one-letter code: MKQYLELMQKVLDEGTQKNDRTGTGTLSIFGHQMRFNLREGFPLVTTKRCHLRSIIHELLWFLQGDTNVAYLHENNVTIWDEWADENGNLGPVYGKQWRAWPAPDGRHIDQITTVMNQLKNDPDSRRIIVSAWNVGELDKMALAPCHAFFQFYVADGKLSCQLYQRSCDVFLGLPFNIASYALLVHMMAQQCDLEVGDFVWTGGDTHLYSNHMEQTHLQLSREPRALPKLVIKRKPDSIFDYRFEDFEIEGYDPHPGIKAPVAI.

Arginine 21 is a dUMP binding site. Histidine 51 serves as a coordination point for (6R)-5,10-methylene-5,6,7,8-tetrahydrofolate. A dUMP-binding site is contributed by 126 to 127 (RR). The active-site Nucleophile is the cysteine 146. DUMP is bound by residues 166–169 (RSCD), asparagine 177, and 207–209 (HLY). Aspartate 169 serves as a coordination point for (6R)-5,10-methylene-5,6,7,8-tetrahydrofolate. Alanine 263 is a (6R)-5,10-methylene-5,6,7,8-tetrahydrofolate binding site.

This sequence belongs to the thymidylate synthase family. Bacterial-type ThyA subfamily. Homodimer.

The protein resides in the cytoplasm. The enzyme catalyses dUMP + (6R)-5,10-methylene-5,6,7,8-tetrahydrofolate = 7,8-dihydrofolate + dTMP. It participates in pyrimidine metabolism; dTTP biosynthesis. Catalyzes the reductive methylation of 2'-deoxyuridine-5'-monophosphate (dUMP) to 2'-deoxythymidine-5'-monophosphate (dTMP) while utilizing 5,10-methylenetetrahydrofolate (mTHF) as the methyl donor and reductant in the reaction, yielding dihydrofolate (DHF) as a by-product. This enzymatic reaction provides an intracellular de novo source of dTMP, an essential precursor for DNA biosynthesis. This chain is Thymidylate synthase, found in Citrobacter koseri (strain ATCC BAA-895 / CDC 4225-83 / SGSC4696).